The sequence spans 413 residues: MGTFCSVIKFENLQELKRLCHWGPIIALGVIAICSTMAMIDSVLWYWPLHTTGGSVNFIMLINWTVMILYNYFNAMFVGPGFVPLGWKPEISQDTMYLQYCKVCQAYKAPRSHHCRKCNRCVMKMDHHCPWINNCCGYQNHASFTLFLLLAPLGCIHAAFIFVMTMYTQLYHRLSFGWNTVKIDMSAARRDPLPIVPFGLAAFATTLFALGLALGTTIAVGMLFFIQMKIILRNKTSIESWIEEKAKDRIQYYQLDEVFVFPYDMGSRWRNFKQVFTWSGVPEGDGLEWPVREGCHQYSLTIEQLKQKADKRVRSVRYKVIEDYSGACCPLNKGIKTFFTSPCTEEPRIQLQKGEFILATRGLRYWLYGDKILDDSFIEGVSRIRGWFPRKCVEKCPCDAETDQAPEGEKKNR.

At 1-24 the chain is on the cytoplasmic side; the sequence is MGTFCSVIKFENLQELKRLCHWGP. A helical transmembrane segment spans residues 25-45; that stretch reads IIALGVIAICSTMAMIDSVLW. Residues 46-57 lie on the Lumenal side of the membrane; that stretch reads YWPLHTTGGSVN. Residues 58-78 traverse the membrane as a helical segment; the sequence is FIMLINWTVMILYNYFNAMFV. At 79 to 143 the chain is on the cytoplasmic side; sequence GPGFVPLGWK…NCCGYQNHAS (65 aa). One can recognise a DHHC domain in the interval 99 to 149; sequence QYCKVCQAYKAPRSHHCRKCNRCVMKMDHHCPWINNCCGYQNHASFTLFLL. Cys129 acts as the S-palmitoyl cysteine intermediate in catalysis. The helical transmembrane segment at 144 to 164 threads the bilayer; sequence FTLFLLLAPLGCIHAAFIFVM. At 165 to 205 the chain is on the lumenal side; it reads TMYTQLYHRLSFGWNTVKIDMSAARRDPLPIVPFGLAAFAT. Residues 206–226 form a helical membrane-spanning segment; sequence TLFALGLALGTTIAVGMLFFI. Topologically, residues 227 to 413 are cytoplasmic; that stretch reads QMKIILRNKT…QAPEGEKKNR (187 aa). Residues 313–398 enclose the SH3 domain; it reads VRSVRYKVIE…PRKCVEKCPC (86 aa). 3 S-palmitoyl cysteine lipidation sites follow: Cys328, Cys329, and Cys343. The short motif at 410–413 is the Di-lysine motif element; the sequence is KKNR.

The protein belongs to the DHHC palmitoyltransferase family. In terms of assembly, homooligomerizes. Interacts with SELENOK. In terms of processing, palmitoylated at 3 different sites by ZDHHC16. The combination of the different palmitoylation events strongly affects the quaternary assembly of ZDHHC6, its localization, stability and function. Palmitoylation at Cys-328 accelerates the turnover of ZDHHC6. Depalmitoylated by LYPLA2.

It localises to the endoplasmic reticulum membrane. The enzyme catalyses L-cysteinyl-[protein] + hexadecanoyl-CoA = S-hexadecanoyl-L-cysteinyl-[protein] + CoA. The catalysed reaction is L-cysteinyl-[protein] + octadecanoyl-CoA = S-octadecanoyl-L-cysteinyl-[protein] + CoA. In terms of biological role, endoplasmic reticulum palmitoyl acyltransferase that mediates palmitoylation of proteins such as AMFR, CALX, ITPR1 and TFRC. Palmitoylates calnexin (CALX), which is required for its association with the ribosome-translocon complex and efficient folding of glycosylated proteins. Mediates palmitoylation of AMFR, promoting AMFR distribution to the peripheral endoplasmic reticulum. Together with SELENOK, palmitoylates ITPR1 in immune cells, leading to regulate ITPR1 stability and function. Stearoyltransferase that mediates stearoylation of TFRC to inhibit TFRC-mediated activation of the JNK pathway and mitochondrial fragmentation. The protein is Palmitoyltransferase ZDHHC6 of Homo sapiens (Human).